A 461-amino-acid chain; its full sequence is MPLTPSHKGAVCSDCQGRLEDAVTAACGHTFCRLCLPLPPQMGAQPSSRVLLCPVCQEKEQTEPVLVPVPLGPLGETYCEEHGEKIYFFCENDAEFLCVFCREGPSHQAHAVGFLDEAIQPYRDRLRGRLEALITERDEIEDMKSREDQKLQVLLAQIESKKRHVEATFERLQQELGEQQRLLLARLTELERQIWKERDKYISKLSEEVARLGTQVKELEEKCQQPASELLQDVRVNQSRCETKTFVSPEAISPDLVKKIRDLHRKILTLPEMLRAFSENLVHHLETDSGIVTLDPLTASPSLVLSEDRKSVRYTRQKQNLPDSPLRFEGLPVVLGSPGFSSGRHRWQVEVQLGEGGGCTVGVVGEEVRRKGEQGLSAEEGVWAVILSHQQCWASTSPGTDLPLSEIPRRVGVALDYEAGRVALLNAETRAPIFTFAASFSGKVFPFFAVWKKGSCLTLKG.

The RING-type zinc-finger motif lies at 12–57 (CSDCQGRLEDAVTAACGHTFCRLCLPLPPQMGAQPSSRVLLCPVCQ). The segment at 74 to 115 (LGETYCEEHGEKIYFFCENDAEFLCVFCREGPSHQAHAVGFL) adopts a B box-type zinc-finger fold. Residues C79, H82, C101, and H107 each contribute to the Zn(2+) site. A coiled-coil region spans residues 123-230 (RDRLRGRLEA…EKCQQPASEL (108 aa)). One can recognise a B30.2/SPRY domain in the interval 272–461 (EMLRAFSENL…KKGSCLTLKG (190 aa)).

It belongs to the TRIM/RBCC family. In terms of assembly, interacts with paxillin/PXN; this interaction recruits TRIM15 to focal adhesions. Interacts with TRIM8; this interaction prevents TRIM8 cytoplasmic translocation.

It is found in the cytoplasm. It localises to the nucleus. Its subcellular location is the cell junction. The protein localises to the focal adhesion. The enzyme catalyses S-ubiquitinyl-[E2 ubiquitin-conjugating enzyme]-L-cysteine + [acceptor protein]-L-lysine = [E2 ubiquitin-conjugating enzyme]-L-cysteine + N(6)-ubiquitinyl-[acceptor protein]-L-lysine.. Its function is as follows. E3 ubiquitin ligase that plays a role in several processes including innate antiviral immnity, cell migration and chemotaxis. Acts as a 'Lys-63'-specific ubiquitin ligase for MAPK1/ERK2 and MAPK3/ERK1, promoting their activation by facilitating their interaction with MAP2K1 and MAP2K2. Also plays a role in cell migration and chemotaxis by acting as a stable focal adhesion component upon recruitment by multi-adapter protein paxillin/PXN. Functions in the RIGI-mediated interferon induction pathway upstream or at the level of MAVS. Inhibits NF-kappa-B activation by turnover of 'Lys-63'-linked ubiquitination of MAP3K7/TAK1. Mechanistically, prevents TRIM8 cytoplasmic translocation and thus inhibits TRIM8-mediated 'Lys-63'-linked polyubiquitination of MAP3K7/TAK1 in the cytoplasm. Also has an important regulatory effect on the activation of hepatic stellate cells (HSCs). The sequence is that of E3 ubiquitin-protein ligase TRIM15 (TRIM15) from Sus scrofa (Pig).